A 328-amino-acid chain; its full sequence is Phosphate acyltransferase (328 aa).

This sequence belongs to the PlsX family. In terms of assembly, homodimer. Probably interacts with PlsY.

It is found in the cytoplasm. The enzyme catalyses a fatty acyl-[ACP] + phosphate = an acyl phosphate + holo-[ACP]. Its pathway is lipid metabolism; phospholipid metabolism. Its function is as follows. Catalyzes the reversible formation of acyl-phosphate (acyl-PO(4)) from acyl-[acyl-carrier-protein] (acyl-ACP). This enzyme utilizes acyl-ACP as fatty acyl donor, but not acyl-CoA. This chain is Phosphate acyltransferase, found in Mycoplasma genitalium (strain ATCC 33530 / DSM 19775 / NCTC 10195 / G37) (Mycoplasmoides genitalium).